The primary structure comprises 243 residues: Small ribosomal subunit protein eS4 (243 aa).

The region spanning 43-105 is the S4 RNA-binding domain; the sequence is IPLLYIVRDY…TGEHYRVLPN (63 aa).

Belongs to the eukaryotic ribosomal protein eS4 family. In terms of assembly, part of the 30S ribosomal subunit.

The chain is Small ribosomal subunit protein eS4 from Pyrococcus furiosus (strain ATCC 43587 / DSM 3638 / JCM 8422 / Vc1).